Consider the following 262-residue polypeptide: Ornithine carbamoyltransferase (262 aa).

Carbamoyl phosphate-binding positions include 3 to 7 (STRTR), Q30, R54, and 81 to 84 (HPTQ). Residues N114, D178, and 182–183 (SM) contribute to the L-ornithine site. Residues 219-222 (HCLP) and T247 each bind carbamoyl phosphate.

Belongs to the aspartate/ornithine carbamoyltransferase superfamily. OTCase family.

The protein localises to the cytoplasm. The enzyme catalyses carbamoyl phosphate + L-ornithine = L-citrulline + phosphate + H(+). It participates in amino-acid biosynthesis; L-arginine biosynthesis; L-arginine from L-ornithine and carbamoyl phosphate: step 1/3. The sequence is that of Ornithine carbamoyltransferase (argF) from Neisseria cinerea.